A 474-amino-acid polypeptide reads, in one-letter code: Glycogen synthase (474 aa).

K15 provides a ligand contact to ADP-alpha-D-glucose.

This sequence belongs to the glycosyltransferase 1 family. Bacterial/plant glycogen synthase subfamily.

The enzyme catalyses [(1-&gt;4)-alpha-D-glucosyl](n) + ADP-alpha-D-glucose = [(1-&gt;4)-alpha-D-glucosyl](n+1) + ADP + H(+). The protein operates within glycan biosynthesis; glycogen biosynthesis. In terms of biological role, synthesizes alpha-1,4-glucan chains using ADP-glucose. This Chlamydia trachomatis serovar D (strain ATCC VR-885 / DSM 19411 / UW-3/Cx) protein is Glycogen synthase.